The sequence spans 333 residues: Eukaryotic translation initiation factor 2 subunit 2 (333 aa).

3 disordered regions span residues Met1–Lys87, Ile98–Leu117, and Glu141–Pro165. Ser2 carries the N-acetylserine modification. 2 positions are modified to phosphoserine: Ser2 and Ser13. Residues Ser13 to Pro22 show a composition bias toward basic residues. A Phosphothreonine modification is found at Thr36. Positions Glu40 to Asp51 are enriched in basic and acidic residues. Ser67 bears the Phosphoserine mark. Lys102 is covalently cross-linked (Glycyl lysine isopeptide (Lys-Gly) (interchain with G-Cter in SUMO2)). Position 105 is a phosphoserine (Ser105). Residues Asp106 to Leu117 are compositionally biased toward acidic residues. Phosphoserine is present on residues Ser158 and Ser218. N6-acetyllysine is present on residues Lys265 and Lys293. The C4-type zinc-finger motif lies at Cys281–Cys305.

It belongs to the eIF-2-beta/eIF-5 family. In terms of assembly, eukaryotic translation initiation factor 2 eIF2 is a heterotrimeric complex composed of an alpha (EIF2S1), a beta (EIF2S2) and a gamma (EIF2S3) chain. eIF2 is member of the 43S pre-initiation complex (43S PIC). eIF2 forms a complex with at least CELF1/CUGBP1, CALR, CALR3, EIF2S1, EIF2S2, HSP90B1 and HSPA5. Interacts with BZW2/5MP1. Interacts with EIF5.

The protein resides in the cytoplasm. Its subcellular location is the cytosol. In terms of biological role, component of the eIF2 complex that functions in the early steps of protein synthesis by forming a ternary complex with GTP and initiator tRNA. This complex binds to a 40S ribosomal subunit, followed by mRNA binding to form a 43S pre-initiation complex (43S PIC). Junction of the 60S ribosomal subunit to form the 80S initiation complex is preceded by hydrolysis of the GTP bound to eIF2 and release of an eIF2-GDP binary complex. In order for eIF2 to recycle and catalyze another round of initiation, the GDP bound to eIF2 must exchange with GTP by way of a reaction catalyzed by eIF2B. The protein is Eukaryotic translation initiation factor 2 subunit 2 (EIF2S2) of Bos taurus (Bovine).